Here is a 147-residue protein sequence, read N- to C-terminus: Monothiol glutaredoxin-S5 (147 aa).

Residues 49 to 146 (AAEVRRAVAE…PILKKAGALW (98 aa)) enclose the Glutaredoxin domain. Cys69 is a binding site for [2Fe-2S] cluster. The Responsive for interaction with TGA factors motif lies at 144 to 147 (ALWL).

This sequence belongs to the glutaredoxin family. CC-type subfamily.

Its subcellular location is the cytoplasm. It is found in the nucleus. In terms of biological role, may only reduce GSH-thiol disulfides, but not protein disulfides. This Oryza sativa subsp. japonica (Rice) protein is Monothiol glutaredoxin-S5 (GRXS5).